The primary structure comprises 948 residues: Coatomer subunit beta-1 (948 aa).

HEAT repeat units lie at residues 49 to 87 (ETIPQLFITIIRYVLPSEDHTIQKLLLLYLELIEKTDSK), 92 to 126 (PEMILICQNLRNNLQHPNEYIRGVTLRFLCRMKET), 127 to 164 (EIVEPLTPSVLQNLEHRHPFVRRNAILAIMSIYKLPQG), 274 to 311 (TAIRAAANTYCQLLLSQSDNNVKLILLDRLYELKTLHR), 312 to 349 (DIMVELIIDVLRALSSPNLDIRRKTLDISLDLITHHNI), and 391 to 428 (EVASTVVHLLMDFLGDSNVASALDVVVFVREIIETNPK).

In terms of assembly, oligomeric complex that consists of at least the alpha, beta, beta', gamma, delta, epsilon and zeta subunits.

The protein localises to the cytoplasm. The protein resides in the golgi apparatus membrane. It is found in the cytoplasmic vesicle. Its subcellular location is the COPI-coated vesicle membrane. In terms of biological role, the coatomer is a cytosolic protein complex that binds to dilysine motifs and reversibly associates with Golgi non-clathrin-coated vesicles, which further mediate biosynthetic protein transport from the ER, via the Golgi up to the trans Golgi network. Coatomer complex is required for budding from Golgi membranes, and is essential for the retrograde Golgi-to-ER transport of dilysine-tagged proteins. The polypeptide is Coatomer subunit beta-1 (Arabidopsis thaliana (Mouse-ear cress)).